Consider the following 176-residue polypeptide: NAD(P)H-quinone oxidoreductase subunit 6, chloroplastic (176 aa).

The next 5 membrane-spanning stretches (helical) occupy residues 10–30 (FLLVFLGSGLILGALGVVLFT), 33–53 (IFSAFSLGLVLVCISLFYILA), 63–83 (LLIYVGAINVLIIFSVMFMSG), 105–125 (ISLFVSLISTILNTSWYGIIW), and 152–172 (FFLPFELISIILLVSLIGAIA).

The protein belongs to the complex I subunit 6 family. NDH is composed of at least 16 different subunits, 5 of which are encoded in the nucleus.

It is found in the plastid. The protein localises to the chloroplast thylakoid membrane. It catalyses the reaction a plastoquinone + NADH + (n+1) H(+)(in) = a plastoquinol + NAD(+) + n H(+)(out). The catalysed reaction is a plastoquinone + NADPH + (n+1) H(+)(in) = a plastoquinol + NADP(+) + n H(+)(out). Functionally, NDH shuttles electrons from NAD(P)H:plastoquinone, via FMN and iron-sulfur (Fe-S) centers, to quinones in the photosynthetic chain and possibly in a chloroplast respiratory chain. The immediate electron acceptor for the enzyme in this species is believed to be plastoquinone. Couples the redox reaction to proton translocation, and thus conserves the redox energy in a proton gradient. The polypeptide is NAD(P)H-quinone oxidoreductase subunit 6, chloroplastic (ndhG) (Spinacia oleracea (Spinach)).